Reading from the N-terminus, the 611-residue chain is Developmental and secondary metabolism regulator veA (611 aa).

3 disordered regions span residues 1-57 (MNRK…RPVD), 222-497 (RRRE…ASFD), and 511-611 (LEAS…PGHA). Over residues 14-23 (KSSATRTTND) the composition is skewed to polar residues. The 193-residue stretch at 24-216 (GRAITYEMQV…AEQGCRVRIR (193 aa)) folds into the Velvet domain. The Nuclear localization signal signature appears at 38–43 (QRARAC). Positions 242-254 (AARARASATPDPS) are enriched in low complexity. Residues 274–290 (SASNASHQSLGSISRRP) show a composition bias toward polar residues. Residues 330-340 (YPPNQFVQQQP) are compositionally biased toward low complexity. The span at 341–361 (PMQPPLPQYQPPNYPAPPPPV) shows a compositional bias: pro residues. A compositionally biased stretch (low complexity) spans 362–377 (TAAQQPQPAQSYYNYP). Residues 419-434 (RNSQQIPPTSQPTAYT) show a composition bias toward polar residues. Low complexity-rich tracts occupy residues 435–452 (QPMQPQYAAQMPPAQHYQ) and 461–471 (QASQHSSYSSM). Residues 455-499 (PPPPPSQASQHSSYSSMDLYNSRPAPIEPHHHGNTPASKASFDLP) are PEST. Residues 511 to 533 (LEASSPTSVAPTNAYFSGGQTPI) are compositionally biased toward polar residues.

It belongs to the velvet family. VeA subfamily. In terms of assembly, component of the heterotrimeric velvet complex composed of laeA, veA and velB; VeA acting as a bridging protein between laeA and velB.

The protein resides in the nucleus. The protein localises to the cytoplasm. Its function is as follows. Component of the velvet transcription factor complex that controls sexual/asexual developmental ratio in response to light, promoting sexual development in the darkness while stimulating asexual sporulation under illumination. The velvet complex hat acts as a global regulator for secondary metabolite gene expression. Controls the expression of the dothistromin gene cluster. Regulates hyphal growth and pigment formation. Acts as a positive regulator of virulence. This is Developmental and secondary metabolism regulator veA from Dothistroma septosporum (strain NZE10 / CBS 128990) (Red band needle blight fungus).